The primary structure comprises 121 residues: Basic phospholipase A2 homolog blK-PLA2 (121 aa).

7 disulfides stabilise this stretch: C26-C115, C28-C44, C43-C95, C49-C121, C50-C88, C57-C81, and C75-C86. Residues 105 to 117 form an important for membrane-damaging activities in eukaryotes and bacteria; heparin-binding region; sequence KKYRYHLKPFCKK.

The protein belongs to the phospholipase A2 family. Group II subfamily. K49 sub-subfamily. As to quaternary structure, homodimer; non-covalently linked. Expressed by the venom gland.

It localises to the secreted. Its function is as follows. Snake venom phospholipase A2 (PLA2) homolog that lacks enzymatic activity. Shows myotoxic and edema-inducing activities in vivo. A model of myotoxic mechanism has been proposed: an apo Lys49-PLA2 is activated by the entrance of a hydrophobic molecule (e.g. fatty acid) at the hydrophobic channel of the protein leading to a reorientation of a monomer. This reorientation causes a transition between 'inactive' to 'active' states, causing alignment of C-terminal and membrane-docking sites (MDoS) side-by-side and putting the membrane-disruption sites (MDiS) in the same plane, exposed to solvent and in a symmetric position for both monomers. The MDoS region stabilizes the toxin on membrane by the interaction of charged residues with phospholipid head groups. Subsequently, the MDiS region destabilizes the membrane with penetration of hydrophobic residues. This insertion causes a disorganization of the membrane, allowing an uncontrolled influx of ions (i.e. calcium and sodium), and eventually triggering irreversible intracellular alterations and cell death. The protein is Basic phospholipase A2 homolog blK-PLA2 of Bothrops leucurus (Whitetail lancehead).